The chain runs to 199 residues: ATP-dependent Clp protease proteolytic subunit (199 aa).

S97 acts as the Nucleophile in catalysis. The active site involves H122.

This sequence belongs to the peptidase S14 family. In terms of assembly, fourteen ClpP subunits assemble into 2 heptameric rings which stack back to back to give a disk-like structure with a central cavity, resembling the structure of eukaryotic proteasomes.

The protein resides in the cytoplasm. It carries out the reaction Hydrolysis of proteins to small peptides in the presence of ATP and magnesium. alpha-casein is the usual test substrate. In the absence of ATP, only oligopeptides shorter than five residues are hydrolyzed (such as succinyl-Leu-Tyr-|-NHMec, and Leu-Tyr-Leu-|-Tyr-Trp, in which cleavage of the -Tyr-|-Leu- and -Tyr-|-Trp bonds also occurs).. In terms of biological role, cleaves peptides in various proteins in a process that requires ATP hydrolysis. Has a chymotrypsin-like activity. Plays a major role in the degradation of misfolded proteins. The protein is ATP-dependent Clp protease proteolytic subunit of Citrifermentans bemidjiense (strain ATCC BAA-1014 / DSM 16622 / JCM 12645 / Bem) (Geobacter bemidjiensis).